Here is a 570-residue protein sequence, read N- to C-terminus: Peptidyl-prolyl cis-trans isomerase-like 2 (570 aa).

In terms of domain architecture, U-box spans 37 to 110; the sequence is KRLPFNFCSL…GDYVDPVTYK (74 aa). Disordered regions lie at residues 215 to 253, 428 to 449, and 469 to 570; these read RSER…KPTP, STTL…PTPD, and KKAE…SSWD. The segment covering 234–248 has biased composition (low complexity); sequence STTTSTQSKTASFQS. The region spanning 298–457 is the PPIase cyclophilin-type domain; it reads QKGYARISTT…PDIRITDVTI (160 aa). Residues 428–446 show a composition bias toward polar residues; it reads STTLNNLETHPVNSSTNRP. Over residues 469 to 483 the composition is skewed to basic and acidic residues; it reads KKAEEASGKNKKVDP. 2 stretches are compositionally biased toward acidic residues: residues 484–497 and 535–550; these read TEED…DDDQ and QEED…EPEP.

This sequence belongs to the cyclophilin-type PPIase family. PPIL2 subfamily.

It localises to the nucleus. The catalysed reaction is [protein]-peptidylproline (omega=180) = [protein]-peptidylproline (omega=0). The enzyme catalyses S-ubiquitinyl-[E2 ubiquitin-conjugating enzyme]-L-cysteine + [acceptor protein]-L-lysine = [E2 ubiquitin-conjugating enzyme]-L-cysteine + N(6)-ubiquitinyl-[acceptor protein]-L-lysine.. Functionally, may catalyze the cis-trans isomerization of proline imidic peptide bonds in oligopeptides thereby assisting the folding of proteins. May also function as a chaperone, playing a role in intracellular transport of proteins. May also have a protein ubiquitin ligase activity acting as an E3 ubiquitin protein ligase or as a ubiquitin-ubiquitin ligase promoting elongation of ubiquitin chains on proteins. The polypeptide is Peptidyl-prolyl cis-trans isomerase-like 2 (cyp8) (Aspergillus oryzae (strain ATCC 42149 / RIB 40) (Yellow koji mold)).